The primary structure comprises 431 residues: Adenylosuccinate lyase (431 aa).

N(6)-(1,2-dicarboxyethyl)-AMP is bound by residues 4–5 (RY), 67–69 (RHD), and 93–94 (TS). Catalysis depends on His-141, which acts as the Proton donor/acceptor. Gln-212 provides a ligand contact to N(6)-(1,2-dicarboxyethyl)-AMP. Ser-262 (proton donor/acceptor) is an active-site residue. Residues Ser-263, 268-270 (KRN), and 307-311 (SVERV) contribute to the N(6)-(1,2-dicarboxyethyl)-AMP site.

This sequence belongs to the lyase 1 family. Adenylosuccinate lyase subfamily. Homooligomer. Residues from neighboring subunits contribute catalytic and substrate-binding residues to each active site.

It carries out the reaction N(6)-(1,2-dicarboxyethyl)-AMP = fumarate + AMP. It catalyses the reaction (2S)-2-[5-amino-1-(5-phospho-beta-D-ribosyl)imidazole-4-carboxamido]succinate = 5-amino-1-(5-phospho-beta-D-ribosyl)imidazole-4-carboxamide + fumarate. It functions in the pathway purine metabolism; AMP biosynthesis via de novo pathway; AMP from IMP: step 2/2. The protein operates within purine metabolism; IMP biosynthesis via de novo pathway; 5-amino-1-(5-phospho-D-ribosyl)imidazole-4-carboxamide from 5-amino-1-(5-phospho-D-ribosyl)imidazole-4-carboxylate: step 2/2. In terms of biological role, catalyzes two reactions in de novo purine nucleotide biosynthesis. Catalyzes the breakdown of 5-aminoimidazole- (N-succinylocarboxamide) ribotide (SAICAR or 2-[5-amino-1-(5-phospho-beta-D-ribosyl)imidazole-4-carboxamido]succinate) to 5-aminoimidazole-4-carboxamide ribotide (AICAR or 5-amino-1-(5-phospho-beta-D-ribosyl)imidazole-4-carboxamide) and fumarate, and of adenylosuccinate (ADS or N(6)-(1,2-dicarboxyethyl)-AMP) to adenosine monophosphate (AMP) and fumarate. The chain is Adenylosuccinate lyase (purB) from Synechocystis sp. (strain ATCC 27184 / PCC 6803 / Kazusa).